The sequence spans 550 residues: 2-succinyl-5-enolpyruvyl-6-hydroxy-3-cyclohexene-1-carboxylate synthase (550 aa).

The protein belongs to the TPP enzyme family. MenD subfamily. In terms of assembly, homodimer. Requires Mg(2+) as cofactor. It depends on Mn(2+) as a cofactor. Thiamine diphosphate is required as a cofactor.

It catalyses the reaction isochorismate + 2-oxoglutarate + H(+) = 5-enolpyruvoyl-6-hydroxy-2-succinyl-cyclohex-3-ene-1-carboxylate + CO2. Its pathway is quinol/quinone metabolism; 1,4-dihydroxy-2-naphthoate biosynthesis; 1,4-dihydroxy-2-naphthoate from chorismate: step 2/7. It functions in the pathway quinol/quinone metabolism; menaquinone biosynthesis. Functionally, catalyzes the thiamine diphosphate-dependent decarboxylation of 2-oxoglutarate and the subsequent addition of the resulting succinic semialdehyde-thiamine pyrophosphate anion to isochorismate to yield 2-succinyl-5-enolpyruvyl-6-hydroxy-3-cyclohexene-1-carboxylate (SEPHCHC). The protein is 2-succinyl-5-enolpyruvyl-6-hydroxy-3-cyclohexene-1-carboxylate synthase of Desulfitobacterium hafniense (strain DSM 10664 / DCB-2).